The sequence spans 1323 residues: Nck-associated protein 5-like (1323 aa).

Disordered stretches follow at residues 1–22, 113–142, 156–175, 204–238, 260–314, and 341–714; these read MDQPAGGTGKLRASAGEDDSME, QIPLTPLQPPSERPTSPAPNVSEGPATSLP, QQLRPGGPGPPATPPPALDA, PATPWRPTGQGPGSPEPINGEPCGPPQPEPSPWAP, PGEE…DTLL, and GATG…EQPE. The tract at residues 1–135 is mediates interaction with CDK5RAP2 and is required for homodimerization and microtubule bundle formation; it reads MDQPAGGTGK…PTSPAPNVSE (135 aa). Positions 22 to 109 form a coiled coil; that stretch reads ELSTCQELLH…LQQKLQLTAN (88 aa). Composition is skewed to pro residues over residues 162–172 and 226–236; these read GPGPPATPPPA and CGPPQPEPSPW. Residues 271 to 298 are compositionally biased toward low complexity; sequence ASSRAPPSAQGPSSGPHCAPGSSSSSSS. Residues 353–364 show a composition bias toward pro residues; that stretch reads PGKPNSPDPGPP. Phosphoserine; by CDK1 is present on residues Ser-436, Ser-447, Ser-466, and Ser-473. The (S/T)X(I/L)P motif 1 motif lies at 480 to 483; the sequence is SRIP. 3 positions are modified to phosphoserine: Ser-489, Ser-492, and Ser-494. A compositionally biased stretch (polar residues) spans 531–542; the sequence is LRPSQSTVSTAL. At Ser-573 the chain carries Phosphoserine; by CDK1. The span at 647-660 shows a compositional bias: basic and acidic residues; sequence RPGDPSHTPLRDRL. Residue Thr-654 is modified to Phosphothreonine. The mediates interaction with beta-tubulin and is required for microtubule bundle formation stretch occupies residues 743-1136; it reads RVYSSHSMGA…SGTPSKNLPK (394 aa). Ser-760 is subject to Phosphoserine; by CDK1. 4 disordered regions span residues 778–875, 892–948, 979–1003, and 1027–1323; these read ALCP…HSAI, GQER…EVKT, AYLSRARPRPGGPATVPSPGLGQAQ, and KELP…GSQG. A compositionally biased stretch (low complexity) spans 799 to 817; sequence KPKSPHSSPTKLPSKSPTK. A (S/T)X(I/L)P motif 2 motif is present at residues 808–811; it reads TKLP. The (S/T)X(I/L)P motif 3; required for interaction with MAPRE1 motif lies at 918-921; the sequence is SKLP. Positions 925 to 934 are enriched in basic and acidic residues; sequence RRTEATKNKD. The stretch at 942 to 985 forms a coiled coil; the sequence is LRKEVKTEARKLEAESLNISKLMAKAEDLRRALEEEKAYLSRAR. Residues 1027 to 1041 show a composition bias toward basic and acidic residues; that stretch reads KELPPKSWREPKPEY. Polar residues-rich tracts occupy residues 1097–1112 and 1124–1136; these read VSTTHFTACGSLTRTL and HSSSGTPSKNLPK. Residues 1143–1153 are compositionally biased toward pro residues; it reads DPPPGAPPARP. Phosphoserine is present on Ser-1184. 2 stretches are compositionally biased toward polar residues: residues 1225 to 1237 and 1264 to 1273; these read TFPNTRTAGSSSD and VDPSRTSTPQ. Over residues 1302–1323 the composition is skewed to low complexity; that stretch reads LETSESLSDSLYDSLSSCGSQG.

In terms of assembly, homodimer. Interacts with CDK5RAP2. Interacts with MAPRE1. Interacts with beta-tubulin. CDK1/Cyclin B-dependent phosphorylation mediates its dissociation from centrosomes during mitosis.

The protein resides in the cytoplasm. It is found in the cytoskeleton. The protein localises to the microtubule organizing center. It localises to the centrosome. Its function is as follows. Regulates microtubule organization and stabilization. Promotes microtubule growth and bundling formation and stabilizes microtubules by increasing intense acetylation of microtubules. Both tubulin-binding and homodimer formation are required for NCKAP5L-mediated microtubule bundle formation. The sequence is that of Nck-associated protein 5-like (Nckap5l) from Mus musculus (Mouse).